The sequence spans 878 residues: Alanine--tRNA ligase (878 aa).

Residues His568, His572, Cys669, and His673 each coordinate Zn(2+).

It belongs to the class-II aminoacyl-tRNA synthetase family. Requires Zn(2+) as cofactor.

The protein resides in the cytoplasm. The catalysed reaction is tRNA(Ala) + L-alanine + ATP = L-alanyl-tRNA(Ala) + AMP + diphosphate. Functionally, catalyzes the attachment of alanine to tRNA(Ala) in a two-step reaction: alanine is first activated by ATP to form Ala-AMP and then transferred to the acceptor end of tRNA(Ala). Also edits incorrectly charged Ser-tRNA(Ala) and Gly-tRNA(Ala) via its editing domain. The sequence is that of Alanine--tRNA ligase from Polaromonas sp. (strain JS666 / ATCC BAA-500).